A 529-amino-acid polypeptide reads, in one-letter code: Ribonuclease Y (529 aa).

Residues 4-24 (GLIYISLEVLVACLITALIMY) form a helical membrane-spanning segment. The KH domain maps to 216–297 (LTSRIALPCS…NRIEEVYHRV (82 aa)). The region spanning 342–435 (ALQHSKEVAL…VCAADALSAG (94 aa)) is the HD domain.

It belongs to the RNase Y family.

The protein localises to the cell membrane. Functionally, endoribonuclease that initiates mRNA decay. In Helicobacter pylori (strain J99 / ATCC 700824) (Campylobacter pylori J99), this protein is Ribonuclease Y.